The following is a 148-amino-acid chain: Large ribosomal subunit protein uL15 (148 aa).

The disordered stretch occupies residues 14–54 (HRKKRVGCGEGGGHGKTSGRGGKGQTARSGSSIRPGFEGGQ). A compositionally biased stretch (gly residues) spans 21-37 (CGEGGGHGKTSGRGGKG).

It belongs to the universal ribosomal protein uL15 family. As to quaternary structure, part of the 50S ribosomal subunit.

Functionally, binds to the 23S rRNA. In Opitutus terrae (strain DSM 11246 / JCM 15787 / PB90-1), this protein is Large ribosomal subunit protein uL15.